A 175-amino-acid chain; its full sequence is Large ribosomal subunit protein uL15 (175 aa).

2 disordered regions span residues 1-65 and 155-175; these read MSTL…LPKF and PESA…QPKA. Positions 12–21 are enriched in basic residues; that stretch reads RSWHRKKRVG. Gly residues predominate over residues 22 to 38; that stretch reads RGQGSGLGKTAGRGGKG. Residues 160-169 show a composition bias toward low complexity; the sequence is KAHAGKGVKA.

It belongs to the universal ribosomal protein uL15 family. Part of the 50S ribosomal subunit.

Functionally, binds to the 23S rRNA. The protein is Large ribosomal subunit protein uL15 of Myxococcus xanthus (strain DK1622).